The chain runs to 383 residues: Cytochrome b (383 aa).

The next 4 helical transmembrane spans lie at 30-50, 74-96, 109-129, and 175-195; these read FGSL…LLAM, WILR…CHIG, TWIV…IGYV, and FFSL…AHLL. H80 and H94 together coordinate heme b. The heme b site is built by H179 and H193. H198 provides a ligand contact to a ubiquinone. 4 consecutive transmembrane segments (helical) span residues 221 to 241, 289 to 309, 320 to 340, and 345 to 365; these read FTIK…IIGI, GVLA…LDRS, AKFF…IGSA, and EPYV…FLVL.

The protein belongs to the cytochrome b family. As to quaternary structure, the main subunits of complex b-c1 are: cytochrome b, cytochrome c1 and the Rieske protein. The cofactor is heme b.

It localises to the mitochondrion inner membrane. Its function is as follows. Component of the ubiquinol-cytochrome c reductase complex (complex III or cytochrome b-c1 complex) that is part of the mitochondrial respiratory chain. The b-c1 complex mediates electron transfer from ubiquinol to cytochrome c. Contributes to the generation of a proton gradient across the mitochondrial membrane that is then used for ATP synthesis. This chain is Cytochrome b (mt:Cyt-b), found in Trichoplax adhaerens (Trichoplax reptans).